The following is an 82-amino-acid chain: MKEGIHPKNHKVIFQDVNSGYRFLSTSTKTSNETAEWEDGNTYPVIKVEVSSDTHPFYTGRQKFNEKGGRVEQFKKRYNMGK.

It belongs to the bacterial ribosomal protein bL31 family. Type B subfamily. As to quaternary structure, part of the 50S ribosomal subunit after the end of exponential growth.

While neither of the L31 paralogs is essential, this protein does not seem to function as the main L31 protein. Has a higher affinity for 70S ribosomes than the zinc-containing L31 paralog; is able to displace it to varying extents, even under zinc-replete conditions. The chain is Large ribosomal subunit protein bL31B (rpmE2) from Bacillus subtilis (strain 168).